The sequence spans 147 residues: Hemoglobin subunit beta-3 (147 aa).

The 145-residue stretch at 3–147 (HWTAEEKAVI…LVDALSHSYH (145 aa)) folds into the Globin domain. Heme b is bound by residues H64 and H93.

Belongs to the globin family. In terms of assembly, heterotetramer of two alpha chains and two beta chains. Red blood cells.

Its function is as follows. This is a tadpole (larval) beta chain. In Aquarana catesbeiana (American bullfrog), this protein is Hemoglobin subunit beta-3.